The primary structure comprises 86 residues: RNA-binding protein Hfq (86 aa).

A Sm domain is found at 12–73; it reads DIFLNQVRKE…ISTITPQKPV (62 aa).

The protein belongs to the Hfq family. As to quaternary structure, homohexamer.

Functionally, RNA chaperone that binds small regulatory RNA (sRNAs) and mRNAs to facilitate mRNA translational regulation in response to envelope stress, environmental stress and changes in metabolite concentrations. Also binds with high specificity to tRNAs. The sequence is that of RNA-binding protein Hfq from Thermoanaerobacter pseudethanolicus (strain ATCC 33223 / 39E) (Clostridium thermohydrosulfuricum).